The sequence spans 204 residues: Ribosomal RNA small subunit methyltransferase G (204 aa).

S-adenosyl-L-methionine-binding positions include Gly-74, Leu-79, 125–126 (AY), and Arg-138.

The protein belongs to the methyltransferase superfamily. RNA methyltransferase RsmG family.

It localises to the cytoplasm. Functionally, specifically methylates the N7 position of a guanine in 16S rRNA. The polypeptide is Ribosomal RNA small subunit methyltransferase G (Brachyspira hyodysenteriae (strain ATCC 49526 / WA1)).